Here is a 644-residue protein sequence, read N- to C-terminus: Macrolide export ATP-binding/permease protein MacB (644 aa).

In terms of domain architecture, ABC transporter spans 6–244 (LELDGVWRRF…SQATEAQPDG (239 aa)). 42-49 (GASGSGKS) is an ATP binding site. The next 5 helical transmembrane spans lie at 271–291 (ALTMLGIVIGIASVVSVIAIG), 415–435 (EAVGRVILVGMVPATVIGVVA), 517–537 (LSLLLALVAVISLVVGGIGVM), 574–594 (LVCLVGGAIGVALSYGVSFVF), and 609–629 (VIALAVACSSLIGVLFGFLPA).

Belongs to the ABC transporter superfamily. Macrolide exporter (TC 3.A.1.122) family. In terms of assembly, homodimer.

The protein localises to the cell inner membrane. Non-canonical ABC transporter that contains transmembrane domains (TMD), which form a pore in the inner membrane, and an ATP-binding domain (NBD), which is responsible for energy generation. Confers resistance against macrolides. This chain is Macrolide export ATP-binding/permease protein MacB, found in Chromobacterium violaceum (strain ATCC 12472 / DSM 30191 / JCM 1249 / CCUG 213 / NBRC 12614 / NCIMB 9131 / NCTC 9757 / MK).